Consider the following 458-residue polypeptide: Dynein regulatory complex protein 10 (458 aa).

3 coiled-coil regions span residues 96-137, 209-255, and 285-379; these read GQTL…HKVN, IQDI…KNHL, and QVRL…IRAE. In terms of domain architecture, IQ spans 397–426; the sequence is MVRAATLIQAVWKGYLVRSILRSKKKKRGK. Residues 419 to 458 form a disordered region; it reads SKKKKRGKGKGKDKGKGKEKPKEEKAKEKKPKAKGKGKKK. Positions 428 to 445 are enriched in basic and acidic residues; the sequence is KGKDKGKGKEKPKEEKAK. Residues 446-458 are compositionally biased toward basic residues; it reads EKKPKAKGKGKKK.

It belongs to the DRC10 family. As to quaternary structure, component of the nexin-dynein regulatory complex (N-DRC). Interacts with CFAP52.

The protein localises to the cytoplasm. Its subcellular location is the cytoskeleton. It is found in the flagellum axoneme. Its function is as follows. Component of the nexin-dynein regulatory complex (N-DRC), a key regulator of ciliary/flagellar motility which maintains the alignment and integrity of the distal axoneme and regulates microtubule sliding in motile axonemes. In Mus musculus (Mouse), this protein is Dynein regulatory complex protein 10 (Iqcd).